We begin with the raw amino-acid sequence, 151 residues long: MRALVQRVSEASVVVEGQVVGAVERGLLVLLAVERGDGEKQLEEMVRKVARLRIFPDEAGKMNLSVKDIEGEVLVVSQFTLAADMRKGYRPSFSLAEEPKRAEALYLDYCQRLNQHEGVVVAQGLFGADMQVKLINDGPVTIWLDLPPQEG.

The Gly-cisPro motif, important for rejection of L-amino acids signature appears at 138 to 139 (GP).

This sequence belongs to the DTD family. Homodimer.

The protein localises to the cytoplasm. The catalysed reaction is glycyl-tRNA(Ala) + H2O = tRNA(Ala) + glycine + H(+). The enzyme catalyses a D-aminoacyl-tRNA + H2O = a tRNA + a D-alpha-amino acid + H(+). Its function is as follows. An aminoacyl-tRNA editing enzyme that deacylates mischarged D-aminoacyl-tRNAs. Also deacylates mischarged glycyl-tRNA(Ala), protecting cells against glycine mischarging by AlaRS. Acts via tRNA-based rather than protein-based catalysis; rejects L-amino acids rather than detecting D-amino acids in the active site. By recycling D-aminoacyl-tRNA to D-amino acids and free tRNA molecules, this enzyme counteracts the toxicity associated with the formation of D-aminoacyl-tRNA entities in vivo and helps enforce protein L-homochirality. In Magnetococcus marinus (strain ATCC BAA-1437 / JCM 17883 / MC-1), this protein is D-aminoacyl-tRNA deacylase.